The following is a 143-amino-acid chain: D-aminoacyl-tRNA deacylase (143 aa).

The short motif at 135-136 is the Gly-cisPro motif, important for rejection of L-amino acids element; the sequence is GP.

The protein belongs to the DTD family. As to quaternary structure, homodimer.

The protein resides in the cytoplasm. It catalyses the reaction glycyl-tRNA(Ala) + H2O = tRNA(Ala) + glycine + H(+). It carries out the reaction a D-aminoacyl-tRNA + H2O = a tRNA + a D-alpha-amino acid + H(+). An aminoacyl-tRNA editing enzyme that deacylates mischarged D-aminoacyl-tRNAs. Also deacylates mischarged glycyl-tRNA(Ala), protecting cells against glycine mischarging by AlaRS. Acts via tRNA-based rather than protein-based catalysis; rejects L-amino acids rather than detecting D-amino acids in the active site. By recycling D-aminoacyl-tRNA to D-amino acids and free tRNA molecules, this enzyme counteracts the toxicity associated with the formation of D-aminoacyl-tRNA entities in vivo and helps enforce protein L-homochirality. The polypeptide is D-aminoacyl-tRNA deacylase (Nocardia farcinica (strain IFM 10152)).